A 257-amino-acid polypeptide reads, in one-letter code: Type III pantothenate kinase (257 aa).

Residue 6–13 (DAGNTNIV) participates in ATP binding. Residues Tyr-100 and 107–110 (GADR) each bind substrate. Asp-109 (proton acceptor) is an active-site residue. Asp-129 is a K(+) binding site. Thr-132 is an ATP binding site. Thr-184 is a binding site for substrate.

Belongs to the type III pantothenate kinase family. Homodimer. It depends on NH4(+) as a cofactor. The cofactor is K(+).

The protein localises to the cytoplasm. The enzyme catalyses (R)-pantothenate + ATP = (R)-4'-phosphopantothenate + ADP + H(+). Its pathway is cofactor biosynthesis; coenzyme A biosynthesis; CoA from (R)-pantothenate: step 1/5. Its function is as follows. Catalyzes the phosphorylation of pantothenate (Pan), the first step in CoA biosynthesis. The chain is Type III pantothenate kinase from Clostridium botulinum (strain Alaska E43 / Type E3).